We begin with the raw amino-acid sequence, 2128 residues long: Spectrin beta chain, erythrocytic (2128 aa).

Positions 1–15 (MTSATEFENVGNQPP) are enriched in polar residues. Residues 1–30 (MTSATEFENVGNQPPFSRINARWDAPDDEL) are disordered. An actin-binding region spans residues 2–275 (TSATEFENVG…IITYVVAFYH (274 aa)). The residue at position 36 (serine 36) is a Phosphoserine. Calponin-homology (CH) domains follow at residues 54–158 (VVQK…LRFQ) and 173–278 (RSAK…HYFS). The residue at position 104 (threonine 104) is a Phosphothreonine. Spectrin repeat units follow at residues 303-411 (MIEK…LALR), 416-517 (RQEF…QRLE), 521-627 (ALQK…QLEQ), 630-733 (RLWK…DLQD), 736-838 (NFFQ…KLQE), 845-942 (VFGE…REAV), 950-1050 (NYCV…LSLG), 1054-1157 (KLQA…NTLT), 1162-1250 (FQEF…RHKK), 1267-1368 (ELQN…EQLS), 1381-1455 (ADLN…FLDL), 1473-1574 (LQIS…RLRD), 1576-1680 (HEAQ…RLEN), 1682-1784 (YHLF…MQLL), 1789-1890 (DLHR…RAQL), 1897-1997 (FRFF…DRLH), and 2004-2064 (QFSR…KPTT). The residue at position 1289 (serine 1289) is a Phosphoserine. Serine 2034 carries the post-translational modification Phosphoserine. Positions 2062 to 2108 (PTTLELKERQTPERPTEEPGPQEEEGETAGEAPQVHHAATERTSPVS) are disordered. Phosphothreonine is present on residues threonine 2064, threonine 2072, and threonine 2101. Basic and acidic residues predominate over residues 2066–2078 (ELKERQTPERPTE). Phosphoserine is present on residues serine 2105, serine 2108, serine 2114, serine 2116, and serine 2119.

The protein belongs to the spectrin family. As to quaternary structure, composed of nonhomologous chains, alpha and beta, which aggregate to form dimers, tetramers, and higher polymers. Interacts with BCAM.

Its subcellular location is the cytoplasm. The protein localises to the cytoskeleton. The protein resides in the cell cortex. Its function is as follows. Spectrin is the major constituent of the cytoskeletal network underlying the erythrocyte plasma membrane. It associates with band 4.1 and actin to form the cytoskeletal superstructure of the erythrocyte plasma membrane. This chain is Spectrin beta chain, erythrocytic (Sptb), found in Mus musculus (Mouse).